We begin with the raw amino-acid sequence, 596 residues long: Potassium-transporting ATPase potassium-binding subunit (596 aa).

The next 10 helical transmembrane spans lie at 6–26 (ILTI…LGGF), 67–87 (AIGL…LQLF), 136–156 (GLTT…IALI), 177–197 (ITLY…VGQG), 283–303 (LSNF…CFTF), 314–334 (WVVL…AVHF), 413–433 (GLYG…LMIG), 450–470 (MVAI…AIAV), 518–538 (MLAI…LALA), and 560–580 (LFIV…YVPA).

It belongs to the KdpA family. The system is composed of three essential subunits: KdpA, KdpB and KdpC.

The protein localises to the cell inner membrane. Its function is as follows. Part of the high-affinity ATP-driven potassium transport (or Kdp) system, which catalyzes the hydrolysis of ATP coupled with the electrogenic transport of potassium into the cytoplasm. This subunit binds the periplasmic potassium ions and delivers the ions to the membrane domain of KdpB through an intramembrane tunnel. The chain is Potassium-transporting ATPase potassium-binding subunit from Polynucleobacter asymbioticus (strain DSM 18221 / CIP 109841 / QLW-P1DMWA-1) (Polynucleobacter necessarius subsp. asymbioticus).